The following is a 168-amino-acid chain: Disulfide bond formation protein B 2 (168 aa).

The Cytoplasmic portion of the chain corresponds to 1–9 (MSLACLRSF). A helical membrane pass occupies residues 10–26 (FLPALLASTAVLVASFH). At 27-44 (LESVVGLVPCALCFSQRL) the chain is on the periplasmic side. A disulfide bridge connects residues Cys36 and Cys39. Residues 45–61 (MLGVYALVCLAALVHSP) traverse the membrane as a helical segment. The Cytoplasmic portion of the chain corresponds to 62–67 (AARGRR). The helical transmembrane segment at 68-85 (AYAGLALASAFGGALLAG) threads the bilayer. Residues 86 to 140 (RHVWLQGDPQVVDGCHLPVEQVLQRPLGEILQMFLLGSPDCVSISWSFLDLTLPE) are Periplasmic-facing. Cys100 and Cys126 are disulfide-bonded. Residues 141–159 (WSLLAFLLLAAMPLSWLVA) traverse the membrane as a helical segment. Residues 160–168 (YRFRKRAMA) lie on the Cytoplasmic side of the membrane.

Belongs to the DsbB family.

The protein resides in the cell inner membrane. In terms of biological role, required for disulfide bond formation in some periplasmic proteins. Acts by oxidizing the DsbA protein. The polypeptide is Disulfide bond formation protein B 2 (Pseudomonas entomophila (strain L48)).